The chain runs to 439 residues: SH3 domain-containing protein 1 (439 aa).

The BAR domain occupies 32 to 263; the sequence is DAVVVDEEEL…MIAEEEAIGS (232 aa). A compositionally biased stretch (polar residues) spans 277 to 291; the sequence is SLPQQEPNSNSSGEI. Residues 277-362 form a disordered region; the sequence is SLPQQEPNSN…SDDHHNHQLL (86 aa). The segment covering 318-358 has biased composition (basic and acidic residues); it reads SPKDEMKSSPQEETKSNHQKEIKSSPQEEIKKSNGSDDHHN. The SH3 domain occupies 366-425; the sequence is DSYFLAKVVHPFDAQAPGELSLAVDDYVIVRQVAGTGWSEGEYKGKAGWFPSAYVEKQEK.

Interacts with the auxilin-like protein AUXI1. In terms of tissue distribution, highly expressed in flowers. Detected in seedlings, roots, leaves and stems.

It is found in the cytoplasmic vesicle. It localises to the clathrin-coated vesicle. Its subcellular location is the cell membrane. The protein resides in the golgi apparatus. The protein localises to the trans-Golgi network. It is found in the endoplasmic reticulum. Lipid binding protein bound strongly to phosphatidic acid, phosphatidylinositol-4-phosphate and phosphatidylinositol-4,5-bisphosphate. Binds actin in vitro. Involved in trafficking and modification of clathrin-coated vesicles. The sequence is that of SH3 domain-containing protein 1 (SH3P1) from Arabidopsis thaliana (Mouse-ear cress).